The following is a 268-amino-acid chain: Imidazole glycerol phosphate synthase subunit HisF (268 aa).

Active-site residues include D12 and D131.

Belongs to the HisA/HisF family. Heterodimer of HisH and HisF.

The protein resides in the cytoplasm. It catalyses the reaction 5-[(5-phospho-1-deoxy-D-ribulos-1-ylimino)methylamino]-1-(5-phospho-beta-D-ribosyl)imidazole-4-carboxamide + L-glutamine = D-erythro-1-(imidazol-4-yl)glycerol 3-phosphate + 5-amino-1-(5-phospho-beta-D-ribosyl)imidazole-4-carboxamide + L-glutamate + H(+). The protein operates within amino-acid biosynthesis; L-histidine biosynthesis; L-histidine from 5-phospho-alpha-D-ribose 1-diphosphate: step 5/9. Functionally, IGPS catalyzes the conversion of PRFAR and glutamine to IGP, AICAR and glutamate. The HisF subunit catalyzes the cyclization activity that produces IGP and AICAR from PRFAR using the ammonia provided by the HisH subunit. This chain is Imidazole glycerol phosphate synthase subunit HisF, found in Methanoregula boonei (strain DSM 21154 / JCM 14090 / 6A8).